A 194-amino-acid chain; its full sequence is Phosphoheptose isomerase (194 aa).

The 158-residue stretch at 37 to 194 (ISNSFKQGGK…LIEFEMAKQA (158 aa)) folds into the SIS domain. 52 to 54 (NGG) lines the substrate pocket. Zn(2+) is bound by residues histidine 61 and glutamate 65. Residues glutamate 65, 93–94 (ND), 119–121 (STS), serine 124, and glutamine 172 each bind substrate. Zn(2+) contacts are provided by glutamine 172 and histidine 180.

The protein belongs to the SIS family. GmhA subfamily. Homotetramer. Requires Zn(2+) as cofactor.

The protein localises to the cytoplasm. It carries out the reaction 2 D-sedoheptulose 7-phosphate = D-glycero-alpha-D-manno-heptose 7-phosphate + D-glycero-beta-D-manno-heptose 7-phosphate. The protein operates within carbohydrate biosynthesis; D-glycero-D-manno-heptose 7-phosphate biosynthesis; D-glycero-alpha-D-manno-heptose 7-phosphate and D-glycero-beta-D-manno-heptose 7-phosphate from sedoheptulose 7-phosphate: step 1/1. In terms of biological role, catalyzes the isomerization of sedoheptulose 7-phosphate in D-glycero-D-manno-heptose 7-phosphate. This is Phosphoheptose isomerase from Actinobacillus pleuropneumoniae serotype 5b (strain L20).